A 164-amino-acid chain; its full sequence is uncharacterized protein (164 aa).

The tract at residues Gly-144–Ala-164 is disordered.

This is an uncharacterized protein from Synechocystis sp. (strain ATCC 27184 / PCC 6803 / Kazusa).